The following is a 156-amino-acid chain: Transcription elongation factor GreA (156 aa).

Residues 8 to 75 (LTKEGYEKLK…ELENMLSKAE (68 aa)) adopt a coiled-coil conformation.

The protein belongs to the GreA/GreB family.

Necessary for efficient RNA polymerase transcription elongation past template-encoded arresting sites. The arresting sites in DNA have the property of trapping a certain fraction of elongating RNA polymerases that pass through, resulting in locked ternary complexes. Cleavage of the nascent transcript by cleavage factors such as GreA or GreB allows the resumption of elongation from the new 3'terminus. GreA releases sequences of 2 to 3 nucleotides. This Thermosipho melanesiensis (strain DSM 12029 / CIP 104789 / BI429) protein is Transcription elongation factor GreA.